A 100-amino-acid chain; its full sequence is Small ribosomal subunit protein uS14c (100 aa).

Belongs to the universal ribosomal protein uS14 family. In terms of assembly, part of the 30S ribosomal subunit.

The protein localises to the plastid. Its subcellular location is the chloroplast. Binds 16S rRNA, required for the assembly of 30S particles. In Cicer arietinum (Chickpea), this protein is Small ribosomal subunit protein uS14c.